The primary structure comprises 178 residues: ATP synthase subunit delta (178 aa).

This sequence belongs to the ATPase delta chain family. As to quaternary structure, F-type ATPases have 2 components, F(1) - the catalytic core - and F(0) - the membrane proton channel. F(1) has five subunits: alpha(3), beta(3), gamma(1), delta(1), epsilon(1). F(0) has three main subunits: a(1), b(2) and c(10-14). The alpha and beta chains form an alternating ring which encloses part of the gamma chain. F(1) is attached to F(0) by a central stalk formed by the gamma and epsilon chains, while a peripheral stalk is formed by the delta and b chains.

It localises to the cell inner membrane. Functionally, f(1)F(0) ATP synthase produces ATP from ADP in the presence of a proton or sodium gradient. F-type ATPases consist of two structural domains, F(1) containing the extramembraneous catalytic core and F(0) containing the membrane proton channel, linked together by a central stalk and a peripheral stalk. During catalysis, ATP synthesis in the catalytic domain of F(1) is coupled via a rotary mechanism of the central stalk subunits to proton translocation. In terms of biological role, this protein is part of the stalk that links CF(0) to CF(1). It either transmits conformational changes from CF(0) to CF(1) or is implicated in proton conduction. This is ATP synthase subunit delta from Acinetobacter baylyi (strain ATCC 33305 / BD413 / ADP1).